The primary structure comprises 182 residues: Interferon beta (182 aa).

The N-terminal stretch at 1 to 21 is a signal peptide; it reads MNNRWILHAAFLLCFSTTALS. Phosphotyrosine is present on Y24. N50, N90, and N97 each carry an N-linked (GlcNAc...) asparagine glycan.

It belongs to the alpha/beta interferon family. In terms of assembly, monomer. This beta interferon does not have a disulfide bond.

Its subcellular location is the secreted. Its function is as follows. Type I interferon cytokine that plays a key role in the innate immune response to infection, developing tumors and other inflammatory stimuli. Signals via binding to high-affinity (IFNAR2) and low-affinity (IFNAR1) heterodimeric receptor, activating the canonical Jak-STAT signaling pathway resulting in transcriptional activation or repression of interferon-regulated genes that encode the effectors of the interferon response, such as antiviral proteins, regulators of cell proliferation and differentiation, and immunoregulatory proteins. Signals mostly via binding to a IFNAR1-IFNAR2 heterodimeric receptor, but can also function with IFNAR1 alone and independently of Jak-STAT pathways. Elicits a wide variety of responses, including antiviral and antibacterial activities, and can regulate the development of B-cells, myelopoiesis and lipopolysaccharide (LPS)-inducible production of tumor necrosis factor. Plays a role in neuronal homeostasis by regulating dopamine turnover and protecting dopaminergic neurons: acts by promoting neuronal autophagy and alpha-synuclein clearance, thereby preventing dopaminergic neuron loss. IFNB1 is more potent than interferon-alpha (IFN-alpha) in inducing the apoptotic and antiproliferative pathways required for control of tumor cell growth. In Mus musculus (Mouse), this protein is Interferon beta.